Consider the following 682-residue polypeptide: Probable potassium transport system protein Kup (682 aa).

12 helical membrane passes run 13–33 (GLLVSIGIVYGDIGTSPLYVM), 55–75 (ISLILWTITLLTTVKYVLIAL), 98–118 (WLVIPALVGGAALLADGTLTP), 138–158 (IPVPNQNSVIMITIVILLFLF), 171–191 (TFGPIMLVWFTFLGLTGIMNL), 217–237 (VGVLILGAVFLATTGAEALYS), 250–270 (SWPYVFICLALNYLGQGVWIL), 295–315 (FFAIILATLAAIIASQALITG), 344–364 (LFIPSINKMLCAATIGIVFLF), 375–395 (GLAITVTMLMTTVLLFEYLSL), 405–425 (VFLLLFGAIETMFLISSLAKF), and 428–448 (GGYVTVIIAAFIGAIMYIWYF).

It belongs to the HAK/KUP transporter (TC 2.A.72) family.

The protein resides in the cell membrane. It carries out the reaction K(+)(in) + H(+)(in) = K(+)(out) + H(+)(out). In terms of biological role, transport of potassium into the cell. Likely operates as a K(+):H(+) symporter. The protein is Probable potassium transport system protein Kup of Lactobacillus gasseri (strain ATCC 33323 / DSM 20243 / BCRC 14619 / CIP 102991 / JCM 1131 / KCTC 3163 / NCIMB 11718 / NCTC 13722 / AM63).